The primary structure comprises 218 residues: 7-cyano-7-deazaguanine synthase (218 aa).

An ATP-binding site is contributed by 11–21 (LSGGMDSATLL). Residues cysteine 193, cysteine 201, cysteine 204, and cysteine 207 each coordinate Zn(2+).

The protein belongs to the QueC family. It depends on Zn(2+) as a cofactor.

It catalyses the reaction 7-carboxy-7-deazaguanine + NH4(+) + ATP = 7-cyano-7-deazaguanine + ADP + phosphate + H2O + H(+). It functions in the pathway purine metabolism; 7-cyano-7-deazaguanine biosynthesis. In terms of biological role, catalyzes the ATP-dependent conversion of 7-carboxy-7-deazaguanine (CDG) to 7-cyano-7-deazaguanine (preQ(0)). The protein is 7-cyano-7-deazaguanine synthase of Aquifex aeolicus (strain VF5).